A 510-amino-acid chain; its full sequence is Fumarate hydratase, mitochondrial (510 aa).

The transit peptide at 1–44 (MYRALRLLARSRPLVRAPAAALASAPGLGGAAVPSFWPPNAARM) directs the protein to the mitochondrion. Residues lysine 61, lysine 66, and lysine 80 each carry the N6-acetyllysine; alternate modification. An N6-succinyllysine; alternate mark is found at lysine 61, lysine 66, and lysine 80. Residues threonine 85 and threonine 90 each carry the phosphothreonine modification. An N6-acetyllysine modification is found at lysine 94. 2 positions are modified to N6-acetyllysine; alternate: lysine 115 and lysine 122. Lysine 115 and lysine 122 each carry N6-succinyllysine; alternate. Residues 145 to 147 (SGT), 176 to 179 (HPND), and 186 to 188 (SSN) each bind substrate. Lysine 213 carries the N6-acetyllysine modification. N6-acetyllysine; alternate is present on lysine 223. The residue at position 223 (lysine 223) is an N6-succinyllysine; alternate. Substrate is bound at residue threonine 234. Histidine 235 functions as the Proton donor/acceptor in the catalytic mechanism. Threonine 236 bears the Phosphothreonine; by PRKDC mark. The residue at position 256 (lysine 256) is an N6-acetyllysine. Position 292 is an N6-acetyllysine; alternate (lysine 292). Lysine 292 is subject to N6-succinyllysine; alternate. Residue serine 365 is part of the active site. Substrate contacts are provided by residues serine 366 and 371–373 (KVN). At serine 366 the chain carries Phosphoserine. An N6-succinyllysine mark is found at lysine 467 and lysine 473. Lysine 502 carries the post-translational modification N6-acetyllysine.

Belongs to the class-II fumarase/aspartase family. Fumarase subfamily. Homotetramer. Interacts with H2AZ1. In terms of processing, phosphorylation at Thr-236 by PRKDC in response to DNA damage promotes translocation to the nucleus and recruitment to DNA double-strand breaks (DSBs). As to expression, expressed in red blood cells; underexpressed in red blood cells (cytoplasm) of patients with hereditary non-spherocytic hemolytic anemia of unknown etiology.

Its subcellular location is the mitochondrion. It is found in the cytoplasm. The protein resides in the cytosol. It localises to the nucleus. The protein localises to the chromosome. It catalyses the reaction (S)-malate = fumarate + H2O. It functions in the pathway carbohydrate metabolism; tricarboxylic acid cycle; (S)-malate from fumarate: step 1/1. Functionally, catalyzes the reversible stereospecific interconversion of fumarate to L-malate. Experiments in other species have demonstrated that specific isoforms of this protein act in defined pathways and favor one direction over the other. In terms of biological role, catalyzes the hydration of fumarate to L-malate in the tricarboxylic acid (TCA) cycle to facilitate a transition step in the production of energy in the form of NADH. Its function is as follows. Catalyzes the dehydration of L-malate to fumarate. Fumarate metabolism in the cytosol plays a role during urea cycle and arginine metabolism; fumarate being a by-product of the urea cycle and amino-acid catabolism. Also plays a role in DNA repair by promoting non-homologous end-joining (NHEJ). In response to DNA damage and phosphorylation by PRKDC, translocates to the nucleus and accumulates at DNA double-strand breaks (DSBs): acts by catalyzing formation of fumarate, an inhibitor of KDM2B histone demethylase activity, resulting in enhanced dimethylation of histone H3 'Lys-36' (H3K36me2). In Homo sapiens (Human), this protein is Fumarate hydratase, mitochondrial.